A 235-amino-acid polypeptide reads, in one-letter code: MSEERPPLRIVISDPRAGDRVVRVKVKGVEDIEYTDDMRKTKESDRRRLPIARVSRKLYEELNLGEVGVLTLRFTTPDGKKVKVPFKAEVKEGLEDNVVEVNMELLGEAAGELETEADAFRAKSWQIAVPDDVHVKLAGLEIGDVFDGGLIGMPGLKFKIRGGTDATGIPMHPGVPGSGRYKVLLAGPPGFHPRERGERRRKSVRGRMIPDPRGERRKTALAQLNIVIHYGDKEE.

The interval 190 to 212 is disordered; that stretch reads GFHPRERGERRRKSVRGRMIPDP.

This sequence belongs to the eukaryotic ribosomal protein eS6 family.

The chain is Small ribosomal subunit protein eS6 from Aeropyrum pernix (strain ATCC 700893 / DSM 11879 / JCM 9820 / NBRC 100138 / K1).